The chain runs to 142 residues: HTH-type transcriptional regulator MntR (142 aa).

Residues methionine 1 to threonine 63 enclose the HTH dtxR-type domain. Positions 8, 11, 77, 99, 102, and 103 each coordinate Mn(2+).

It belongs to the DtxR/MntR family. Homodimer.

The protein resides in the cytoplasm. DNA binding is strongly activated by Mn(2+). Central regulator of manganese homeostasis. This is HTH-type transcriptional regulator MntR from Bacillus cereus (strain ATCC 14579 / DSM 31 / CCUG 7414 / JCM 2152 / NBRC 15305 / NCIMB 9373 / NCTC 2599 / NRRL B-3711).